The primary structure comprises 436 residues: Serine hydroxymethyltransferase (436 aa).

(6S)-5,6,7,8-tetrahydrofolate-binding positions include leucine 133 and 137–139; that span reads GHL. Lysine 242 is subject to N6-(pyridoxal phosphate)lysine. 366–368 is a binding site for (6S)-5,6,7,8-tetrahydrofolate; it reads SPF.

Belongs to the SHMT family. Homodimer. It depends on pyridoxal 5'-phosphate as a cofactor.

It is found in the cytoplasm. It carries out the reaction (6R)-5,10-methylene-5,6,7,8-tetrahydrofolate + glycine + H2O = (6S)-5,6,7,8-tetrahydrofolate + L-serine. It participates in one-carbon metabolism; tetrahydrofolate interconversion. The protein operates within amino-acid biosynthesis; glycine biosynthesis; glycine from L-serine: step 1/1. Its function is as follows. Catalyzes the reversible interconversion of serine and glycine with tetrahydrofolate (THF) serving as the one-carbon carrier. This reaction serves as the major source of one-carbon groups required for the biosynthesis of purines, thymidylate, methionine, and other important biomolecules. Also exhibits THF-independent aldolase activity toward beta-hydroxyamino acids, producing glycine and aldehydes, via a retro-aldol mechanism. In Novosphingobium aromaticivorans (strain ATCC 700278 / DSM 12444 / CCUG 56034 / CIP 105152 / NBRC 16084 / F199), this protein is Serine hydroxymethyltransferase.